The following is a 208-amino-acid chain: Holliday junction branch migration complex subunit RuvA (208 aa).

Residues 1-64 form a domain I region; that stretch reads MIGKLKGIVD…EDMIRLYGFR (64 aa). Residues 65 to 143 are domain II; the sequence is VDAEREWFRL…AFAPIDPALI (79 aa). The segment at 144-152 is flexible linker; it reads ALTGAVEDR. The tract at residues 153 to 208 is domain III; the sequence is TAPQPVADAISALVNLGYAQIQASAAIAAALKGLGEEAGTVEAKTLIRLGLRELAR.

It belongs to the RuvA family. Homotetramer. Forms an RuvA(8)-RuvB(12)-Holliday junction (HJ) complex. HJ DNA is sandwiched between 2 RuvA tetramers; dsDNA enters through RuvA and exits via RuvB. An RuvB hexamer assembles on each DNA strand where it exits the tetramer. Each RuvB hexamer is contacted by two RuvA subunits (via domain III) on 2 adjacent RuvB subunits; this complex drives branch migration. In the full resolvosome a probable DNA-RuvA(4)-RuvB(12)-RuvC(2) complex forms which resolves the HJ.

Its subcellular location is the cytoplasm. The RuvA-RuvB-RuvC complex processes Holliday junction (HJ) DNA during genetic recombination and DNA repair, while the RuvA-RuvB complex plays an important role in the rescue of blocked DNA replication forks via replication fork reversal (RFR). RuvA specifically binds to HJ cruciform DNA, conferring on it an open structure. The RuvB hexamer acts as an ATP-dependent pump, pulling dsDNA into and through the RuvAB complex. HJ branch migration allows RuvC to scan DNA until it finds its consensus sequence, where it cleaves and resolves the cruciform DNA. The sequence is that of Holliday junction branch migration complex subunit RuvA from Methylorubrum extorquens (strain CM4 / NCIMB 13688) (Methylobacterium extorquens).